The primary structure comprises 376 residues: Nuclear hormone receptor family member nhr-124 (376 aa).

The segment at residues 11-89 (PNICAICHQK…LGMRYHNSSE (79 aa)) is a DNA-binding region (nuclear receptor). 2 NR C4-type zinc fingers span residues 14 to 34 (CAIC…CNAC) and 50 to 72 (CKKG…CRSC). The region spanning 125–371 (HLHALNETRY…FSKILTEACR (247 aa)) is the NR LBD domain.

The protein belongs to the nuclear hormone receptor family.

It is found in the nucleus. Its function is as follows. Orphan nuclear receptor. In Caenorhabditis elegans, this protein is Nuclear hormone receptor family member nhr-124 (nhr-124).